Reading from the N-terminus, the 188-residue chain is Putative protein SSX6 (188 aa).

Disordered regions lie at residues 1–22 (MNGD…EKRS) and 74–188 (KRAT…EDDK). Residues 20 to 83 (KRSKAFDDIA…KRATDSQRND (64 aa)) enclose the KRAB-related domain. 2 stretches are compositionally biased toward basic and acidic residues: residues 75 to 96 (RATD…EVER) and 112 to 122 (MPEKPAEEGSD). Serine 123 is subject to Phosphoserine. Basic and acidic residues predominate over residues 147–156 (SSEKIHERSG). Residues 157–170 (PKRGKHAWTHRLRE) are compositionally biased toward basic residues. Residues 179 to 188 (EISDPEEDDK) show a composition bias toward acidic residues.

Belongs to the SSX family. Not detected in any normal tissues. Expressed in a melanoma cell line.

Its function is as follows. Could act as a modulator of transcription. The polypeptide is Putative protein SSX6 (Homo sapiens (Human)).